Here is a 391-residue protein sequence, read N- to C-terminus: Pyruvate dehydrogenase E1 component subunit alpha, mitochondrial (391 aa).

The N-terminal 26 residues, 1–26 (MALSTSRAINHIMKPLSAAVCATRRL), are a transit peptide targeting the mitochondrion. Positions 92, 118, 119, 167, 169, 198, 199, 200, 227, and 229 each coordinate pyruvate. Thiamine diphosphate-binding residues include Tyr118, Arg119, Gly167, Val169, Asp198, Gly199, Ala200, and Asn227. Asp198 is a binding site for Mg(2+). Positions 227 and 229 each coordinate Mg(2+). His293 provides a ligand contact to thiamine diphosphate. The disordered stretch occupies residues 294–313 (SMSDPGSTYRTRDEISGVRQ). The segment covering 303–313 (RTRDEISGVRQ) has biased composition (basic and acidic residues).

In terms of assembly, tetramer of 2 alpha and 2 beta subunits. It depends on thiamine diphosphate as a cofactor. Mg(2+) serves as cofactor.

The protein localises to the mitochondrion matrix. It carries out the reaction N(6)-[(R)-lipoyl]-L-lysyl-[protein] + pyruvate + H(+) = N(6)-[(R)-S(8)-acetyldihydrolipoyl]-L-lysyl-[protein] + CO2. E1 activity is regulated by phosphorylation (inactivation) and dephosphorylation (activation) of the alpha subunit. Its function is as follows. The pyruvate dehydrogenase complex catalyzes the overall conversion of pyruvate to acetyl-CoA and CO(2). It contains multiple copies of three enzymatic components: pyruvate dehydrogenase (E1), dihydrolipoamide acetyltransferase (E2) and lipoamide dehydrogenase (E3). This chain is Pyruvate dehydrogenase E1 component subunit alpha, mitochondrial, found in Solanum tuberosum (Potato).